The sequence spans 215 residues: Peptide methionine sulfoxide reductase MsrA (215 aa).

Cys-58 is a catalytic residue.

It belongs to the MsrA Met sulfoxide reductase family.

The catalysed reaction is L-methionyl-[protein] + [thioredoxin]-disulfide + H2O = L-methionyl-(S)-S-oxide-[protein] + [thioredoxin]-dithiol. The enzyme catalyses [thioredoxin]-disulfide + L-methionine + H2O = L-methionine (S)-S-oxide + [thioredoxin]-dithiol. Functionally, has an important function as a repair enzyme for proteins that have been inactivated by oxidation. Catalyzes the reversible oxidation-reduction of methionine sulfoxide in proteins to methionine. The chain is Peptide methionine sulfoxide reductase MsrA from Pseudomonas aeruginosa (strain LESB58).